The chain runs to 312 residues: Non-structural protein 2 (312 aa).

ATP contacts are provided by residues 107 to 109 (QVR), lysine 185, and 218 to 220 (HGK). Positions 202 to 238 (FAAYIRYNFNKFAAISHGKRHWRLVLHSQLMSHAERL) are RNA-binding. Histidine 222 acts as the For NTPase and RTPase activities in catalysis. ATP is bound at residue arginine 224.

Belongs to the rotavirus NSP2 family. As to quaternary structure, homooctamer. Interacts with VP1; this interaction is weak. Interacts with NSP5; this interaction leads to up-regulation of NSP5 phosphorylation and formation of viral factories. The cofactor is Mg(2+).

It localises to the host cytoplasm. Its function is as follows. Participates in replication and packaging of the viral genome. Plays a crucial role, together with NSP5, in the formation of virus factories (viroplasms) which are large inclusions in the host cytoplasm where replication intermediates are assembled and viral RNA replication takes place. Displays ssRNA binding, NTPase, RNA triphosphatase (RTPase) and ATP-independent helix-unwinding activities. The unwinding activity may prepare and organize plus-strand RNAs for packaging and replication by removing interfering secondary structures. The RTPase activity plays a role in the removal of the gamma-phosphate from the rotavirus RNA minus strands of dsRNA genome segments. This chain is Non-structural protein 2, found in Rotavirus C (strain RVC/Pig/United States/Cowden/1980) (RV-C).